A 137-amino-acid polypeptide reads, in one-letter code: RQILLTRKNFGCGSSREHAPWALDDYGFRAIIAPSFADIFFNNCYKNGLLPIVLTEEQVDRLFKEVEANEGYRLSIDLAEQTLTTPSGETFTFDITEHRKHCLLNGLDEIGLTLQHADEIHAFEEKRRQSQPWLFNG.

The protein belongs to the LeuD family. LeuD type 1 subfamily. In terms of assembly, heterodimer of LeuC and LeuD.

It carries out the reaction (2R,3S)-3-isopropylmalate = (2S)-2-isopropylmalate. It participates in amino-acid biosynthesis; L-leucine biosynthesis; L-leucine from 3-methyl-2-oxobutanoate: step 2/4. Functionally, catalyzes the isomerization between 2-isopropylmalate and 3-isopropylmalate, via the formation of 2-isopropylmaleate. This chain is 3-isopropylmalate dehydratase small subunit (leuD), found in Neisseria lactamica.